Consider the following 329-residue polypeptide: MFQNSFLHKKFISTIEKNNLLPYNSSLLVSFSGGQDSLALVKILYDFKNIYNWKISLIHFDHRWRSDSMLVSKQVIKYAKMCNLSVYYFECPKYLNTEETSRKWRYLTLINTAYVNNFNTIVLAHTATDKAETMLSNLFRGTSLDGLSSIHWSSQLSNAVHLVRPLLNCYRSETSWFCRKYFLPVWIDQSNYNNSLSRNRLRQELIPYIKSYFQPQIEQKCYLLSSLISLDVDFLEQEALRIYSLIQHEELLAMNYLVIKLLHPSLQSRILKIFFISNLDLNLNSIQISDIILLINQSISTNINISNYILGTDGTWLYVGAKTKCIKSN.

32–37 (SGGQDS) provides a ligand contact to ATP.

It belongs to the tRNA(Ile)-lysidine synthase family.

It localises to the plastid. It is found in the chloroplast. It catalyses the reaction cytidine(34) in tRNA(Ile2) + L-lysine + ATP = lysidine(34) in tRNA(Ile2) + AMP + diphosphate + H(+). In terms of biological role, ligates lysine onto the cytidine present at position 34 of the AUA codon-specific tRNA(Ile) that contains the anticodon CAU, in an ATP-dependent manner. Cytidine is converted to lysidine, thus changing the amino acid specificity of the tRNA from methionine to isoleucine. The chain is tRNA(Ile)-lysidine synthase, chloroplastic from Pyropia yezoensis (Susabi-nori).